The sequence spans 336 residues: Heat-inducible transcription repressor HrcA (336 aa).

It belongs to the HrcA family.

Functionally, negative regulator of class I heat shock genes (grpE-dnaK-dnaJ and groELS operons). Prevents heat-shock induction of these operons. The protein is Heat-inducible transcription repressor HrcA of Variovorax paradoxus (strain S110).